Here is a 181-residue protein sequence, read N- to C-terminus: Oligoribonuclease (181 aa).

One can recognise an Exonuclease domain in the interval 8-171 (LIWLDLEMTG…DDIKDSIMEL (164 aa)). Y129 is a catalytic residue.

The protein belongs to the oligoribonuclease family.

It localises to the cytoplasm. 3'-to-5' exoribonuclease specific for small oligoribonucleotides. The chain is Oligoribonuclease from Pseudoalteromonas translucida (strain TAC 125).